Consider the following 452-residue polypeptide: Pup--protein ligase (452 aa).

Glu9 is a Mg(2+) binding site. Residue Arg53 coordinates ATP. Tyr55 is a binding site for Mg(2+). The active-site Proton acceptor is Asp57. Glu63 is a Mg(2+) binding site. Residues Thr66 and Trp419 each coordinate ATP.

It belongs to the Pup ligase/Pup deamidase family. Pup-conjugating enzyme subfamily.

It catalyses the reaction ATP + [prokaryotic ubiquitin-like protein]-L-glutamate + [protein]-L-lysine = ADP + phosphate + N(6)-([prokaryotic ubiquitin-like protein]-gamma-L-glutamyl)-[protein]-L-lysine.. It functions in the pathway protein degradation; proteasomal Pup-dependent pathway. The protein operates within protein modification; protein pupylation. Its function is as follows. Catalyzes the covalent attachment of the prokaryotic ubiquitin-like protein modifier Pup to the proteasomal substrate proteins, thereby targeting them for proteasomal degradation. This tagging system is termed pupylation. The ligation reaction involves the side-chain carboxylate of the C-terminal glutamate of Pup and the side-chain amino group of a substrate lysine. This chain is Pup--protein ligase, found in Salinispora tropica (strain ATCC BAA-916 / DSM 44818 / JCM 13857 / NBRC 105044 / CNB-440).